The chain runs to 145 residues: AP-2 complex subunit sigma (145 aa).

It belongs to the adaptor complexes small subunit family. In terms of assembly, adaptor protein complex 2 (AP-2) is a heterotetramer composed of two large adaptins (alpha-type subunit apl3 and beta-type subunit apl1), a medium chain (mu-type subunit apm4) and a small adaptin (sigma-type subunit aps2).

Its subcellular location is the cell membrane. It localises to the membrane. It is found in the coated pit. In terms of biological role, component of the adaptor complexes which link clathrin to receptors in coated vesicles. Clathrin-associated protein complexes are believed to interact with the cytoplasmic tails of membrane proteins, leading to their selection and concentration. In Aspergillus fumigatus (strain ATCC MYA-4609 / CBS 101355 / FGSC A1100 / Af293) (Neosartorya fumigata), this protein is AP-2 complex subunit sigma (aps2).